The sequence spans 224 residues: MVEYLVSLGADVRSNYDHAIKSAFENGHLQVIKYLISLGSDVSMHYDYILLRASRNGYIDVVKYLIEQGVDPRTNNDKAVRKASKNGRLEIVEYLVTLGADIRIDNDSAVRWASKNGHIKTVEFLVAKGADIRAKNDYSLRHSSKHGHIKMVEYLVAQGADVRADNDYAIKWASGKGHLEVVKYLVEKGADFRADNDCAVKWASQTGRVEIVEYLVSKGAVCPY.

8 ANK repeats span residues 1-14 (MVEY…DVRS), 15-44 (NYDH…DVSM), 46-74 (YDYI…DPRT), 75-104 (NNDK…DIRI), 105-134 (DNDS…DIRA), 136-164 (NDYS…DVRA), 165-194 (DNDY…DFRA), and 196-224 (NDCA…VCPY).

The chain is Putative ankyrin repeat protein R845 from Acanthamoeba polyphaga mimivirus (APMV).